The primary structure comprises 156 residues: Endogenous retrovirus group K member 18 Pro protein (156 aa).

A Peptidase A2 domain is found at Leu-21–Leu-96. Asp-26 is an active-site residue. In terms of domain architecture, G-patch spans Tyr-111–Phe-156.

Belongs to the peptidase A2 family. HERV class-II K(HML-2) subfamily. As to quaternary structure, active as a homodimer. Autoproteolytically processed at the N-terminus. Expected C-terminal autoprocessing not detected. The sequence shown is that of the processed Pro protein.

The catalysed reaction is Processing at the authentic HIV-1 PR recognition site and release of the mature p17 matrix and the p24 capsid protein, as a result of the cleavage of the -SQNY-|-PIVQ- cleavage site.. In terms of biological role, retroviral proteases have roles in the processing of the primary translation products and the maturation of the viral particle. Endogenous Pro proteins may have kept, lost or modified their original function during evolution. The sequence is that of Endogenous retrovirus group K member 18 Pro protein (ERVK-18) from Homo sapiens (Human).